We begin with the raw amino-acid sequence, 405 residues long: Tryptophan synthase beta chain (405 aa).

K96 bears the N6-(pyridoxal phosphate)lysine mark.

The protein belongs to the TrpB family. Tetramer of two alpha and two beta chains. The cofactor is pyridoxal 5'-phosphate.

The enzyme catalyses (1S,2R)-1-C-(indol-3-yl)glycerol 3-phosphate + L-serine = D-glyceraldehyde 3-phosphate + L-tryptophan + H2O. The protein operates within amino-acid biosynthesis; L-tryptophan biosynthesis; L-tryptophan from chorismate: step 5/5. Its function is as follows. The beta subunit is responsible for the synthesis of L-tryptophan from indole and L-serine. This chain is Tryptophan synthase beta chain, found in Clostridium botulinum (strain Eklund 17B / Type B).